We begin with the raw amino-acid sequence, 1177 residues long: DNA-directed RNA polymerase subunit beta (1177 aa).

Positions 1147–1161 (DDTEIEMRDTEDDDD) are enriched in acidic residues. Residues 1147–1177 (DDTEIEMRDTEDDDDHQSADKLNVEVETTKE) form a disordered region. A compositionally biased stretch (basic and acidic residues) spans 1162-1177 (HQSADKLNVEVETTKE).

It belongs to the RNA polymerase beta chain family. As to quaternary structure, the RNAP catalytic core consists of 2 alpha, 1 beta, 1 beta' and 1 omega subunit. When a sigma factor is associated with the core the holoenzyme is formed, which can initiate transcription.

It carries out the reaction RNA(n) + a ribonucleoside 5'-triphosphate = RNA(n+1) + diphosphate. Its function is as follows. DNA-dependent RNA polymerase catalyzes the transcription of DNA into RNA using the four ribonucleoside triphosphates as substrates. In Bacillus thuringiensis (strain Al Hakam), this protein is DNA-directed RNA polymerase subunit beta.